Here is a 184-residue protein sequence, read N- to C-terminus: MSWRSESIWIEFITGSRKTSNFCWAFILFLGSLGFLLVGTSSYLGRNVISLFPSQQIIFFPQGIVMSFYGIAGLFISCYLWCTILWNVGSGYDLFDRKEGIVRIFRWGFPGKSRRIFLRFLMKDIQSIRIEVKEGVSARRVLYMEIRGQGAIPLIRTDENFTTREIEQKAAELAYFLRVPIEVF.

2 helical membrane-spanning segments follow: residues 22–42 (FCWAFILFLGSLGFLLVGTSS) and 57–77 (IIFFPQGIVMSFYGIAGLFIS).

The protein belongs to the Ycf4 family.

The protein resides in the plastid. It localises to the chloroplast thylakoid membrane. In terms of biological role, seems to be required for the assembly of the photosystem I complex. This chain is Photosystem I assembly protein Ycf4, found in Lepidium virginicum (Virginia pepperweed).